The following is a 277-amino-acid chain: Large ribosomal subunit protein uL2c (277 aa).

Residues 225-277 (MNPCDHPHGGGEGRSPIGRPKPVTPWGKPALGKKTRSPKRFSNKYIIRSRKMV) form a disordered region. Residues 255–277 (LGKKTRSPKRFSNKYIIRSRKMV) are compositionally biased toward basic residues.

This sequence belongs to the universal ribosomal protein uL2 family. Part of the 50S ribosomal subunit.

It is found in the plastid. Its subcellular location is the chloroplast. The protein is Large ribosomal subunit protein uL2c (rpl2) of Euglena gracilis.